The primary structure comprises 306 residues: Ubiquitin-conjugating enzyme E2Q-like protein CG4502 (306 aa).

Residues 18–77 (HKSSNNNNNNNNNHNNNINNNNNNDKVDGATGSSPNINNNNNNNNNNNNHDGAAAPSSAG) are disordered. 2 stretches are compositionally biased toward low complexity: residues 22-41 (NNNN…NNNN) and 53-77 (NINN…SSAG). The UBC core domain maps to 138–299 (IRTRRLMKEY…VKTHEKYGWV (162 aa)). Cysteine 234 (glycyl thioester intermediate) is an active-site residue.

It belongs to the ubiquitin-conjugating enzyme family.

It carries out the reaction S-ubiquitinyl-[E1 ubiquitin-activating enzyme]-L-cysteine + [E2 ubiquitin-conjugating enzyme]-L-cysteine = [E1 ubiquitin-activating enzyme]-L-cysteine + S-ubiquitinyl-[E2 ubiquitin-conjugating enzyme]-L-cysteine.. The protein operates within protein modification; protein ubiquitination. In terms of biological role, catalyzes the covalent attachment of ubiquitin to other proteins. This is Ubiquitin-conjugating enzyme E2Q-like protein CG4502 from Drosophila melanogaster (Fruit fly).